A 121-amino-acid polypeptide reads, in one-letter code: UPF0295 protein OB0906 (121 aa).

Helical transmembrane passes span 14–34 (IRTFALILVFAGIITMYGGIL) and 43–63 (VIFFILGTLMVILSCAVYVWI).

This sequence belongs to the UPF0295 family.

It localises to the cell membrane. This is UPF0295 protein OB0906 from Oceanobacillus iheyensis (strain DSM 14371 / CIP 107618 / JCM 11309 / KCTC 3954 / HTE831).